The chain runs to 355 residues: uncharacterized protein (355 aa).

58 to 65 (GYIIFGIK) contributes to the ATP binding site.

This is an uncharacterized protein from Ureaplasma parvum serovar 3 (strain ATCC 700970).